A 132-amino-acid polypeptide reads, in one-letter code: Small ribosomal subunit protein eS17B (132 aa).

Residue serine 43 is modified to Phosphoserine.

The protein belongs to the eukaryotic ribosomal protein eS17 family. Component of the small ribosomal subunit (SSU). Mature yeast ribosomes consist of a small (40S) and a large (60S) subunit. The 40S small subunit contains 1 molecule of ribosomal RNA (18S rRNA) and at least 33 different proteins. The large 60S subunit contains 3 rRNA molecules (25S, 5.8S and 5S rRNA) and at least 46 different proteins.

It localises to the cytoplasm. Its function is as follows. Component of the ribosome, a large ribonucleoprotein complex responsible for the synthesis of proteins in the cell. The small ribosomal subunit (SSU) binds messenger RNAs (mRNAs) and translates the encoded message by selecting cognate aminoacyl-transfer RNA (tRNA) molecules. The large subunit (LSU) contains the ribosomal catalytic site termed the peptidyl transferase center (PTC), which catalyzes the formation of peptide bonds, thereby polymerizing the amino acids delivered by tRNAs into a polypeptide chain. The nascent polypeptides leave the ribosome through a tunnel in the LSU and interact with protein factors that function in enzymatic processing, targeting, and the membrane insertion of nascent chains at the exit of the ribosomal tunnel. This is Small ribosomal subunit protein eS17B (rps1702) from Schizosaccharomyces pombe (strain 972 / ATCC 24843) (Fission yeast).